Here is a 335-residue protein sequence, read N- to C-terminus: D-arabinose 1-dehydrogenase (335 aa).

Residue tyrosine 58 is the Proton donor of the active site. Histidine 124 lines the substrate pocket. Residue 221–287 (SLLRSQETRQ…VSSMEELKLA (67 aa)) participates in NAD(+) binding.

Belongs to the aldo/keto reductase family. Aldo/keto reductase 2 subfamily.

The enzyme catalyses D-arabinose + NAD(+) = D-arabinono-1,4-lactone + NADH + H(+). This is D-arabinose 1-dehydrogenase (ARA2) from Saccharomyces cerevisiae (strain ATCC 204508 / S288c) (Baker's yeast).